A 47-amino-acid chain; its full sequence is Delta-actitoxin-Cgg1b (47 aa).

Proline 3 is modified (hydroxyproline). 3 disulfide bridges follow: cysteine 4-cysteine 44, cysteine 6-cysteine 34, and cysteine 27-cysteine 45.

Belongs to the sea anemone sodium channel inhibitory toxin family. Type I subfamily.

It localises to the secreted. It is found in the nematocyst. Binds voltage-dependently at site 3 of sodium channels (Nav) and inhibits the inactivation, thereby blocking neuronal transmission. The sequence is that of Delta-actitoxin-Cgg1b from Condylactis gigantea (Giant Caribbean anemone).